Consider the following 72-residue polypeptide: Large ribosomal subunit protein bL28 (72 aa).

This sequence belongs to the bacterial ribosomal protein bL28 family.

The sequence is that of Large ribosomal subunit protein bL28 from Chlorobaculum parvum (strain DSM 263 / NCIMB 8327) (Chlorobium vibrioforme subsp. thiosulfatophilum).